Here is a 211-residue protein sequence, read N- to C-terminus: Large ribosomal subunit protein uL4 (211 aa).

Residues 44-94 are disordered; sequence RSGNHATKTRSEVRGGGKKPWSQKGTGHARQGSTRAPHWVGGGTVHGPQKR.

Belongs to the universal ribosomal protein uL4 family. Part of the 50S ribosomal subunit.

In terms of biological role, one of the primary rRNA binding proteins, this protein initially binds near the 5'-end of the 23S rRNA. It is important during the early stages of 50S assembly. It makes multiple contacts with different domains of the 23S rRNA in the assembled 50S subunit and ribosome. Its function is as follows. Forms part of the polypeptide exit tunnel. In Leptospira borgpetersenii serovar Hardjo-bovis (strain JB197), this protein is Large ribosomal subunit protein uL4.